Here is a 706-residue protein sequence, read N- to C-terminus: Ribosomal RNA large subunit methyltransferase K/L (706 aa).

The 112-residue stretch at L43–L154 folds into the THUMP domain.

Belongs to the methyltransferase superfamily. RlmKL family.

The protein resides in the cytoplasm. It carries out the reaction guanosine(2445) in 23S rRNA + S-adenosyl-L-methionine = N(2)-methylguanosine(2445) in 23S rRNA + S-adenosyl-L-homocysteine + H(+). The enzyme catalyses guanosine(2069) in 23S rRNA + S-adenosyl-L-methionine = N(2)-methylguanosine(2069) in 23S rRNA + S-adenosyl-L-homocysteine + H(+). Its function is as follows. Specifically methylates the guanine in position 2445 (m2G2445) and the guanine in position 2069 (m7G2069) of 23S rRNA. The chain is Ribosomal RNA large subunit methyltransferase K/L from Serratia proteamaculans (strain 568).